A 100-amino-acid chain; its full sequence is NADH-quinone oxidoreductase subunit K 2 (100 aa).

3 consecutive transmembrane segments (helical) span residues 4-24 (LWWFIVLGVVLFVIGAAGVLL), 28-48 (ILVVLMSLELLLNSVNINFIA), and 60-80 (IFAIFVIAITAAEVAVALGIL).

This sequence belongs to the complex I subunit 4L family. In terms of assembly, NDH-1 is composed of 14 different subunits. Subunits NuoA, H, J, K, L, M, N constitute the membrane sector of the complex.

Its subcellular location is the cell inner membrane. It carries out the reaction a quinone + NADH + 5 H(+)(in) = a quinol + NAD(+) + 4 H(+)(out). In terms of biological role, NDH-1 shuttles electrons from NADH, via FMN and iron-sulfur (Fe-S) centers, to quinones in the respiratory chain. The immediate electron acceptor for the enzyme in this species is believed to be ubiquinone. Couples the redox reaction to proton translocation (for every two electrons transferred, four hydrogen ions are translocated across the cytoplasmic membrane), and thus conserves the redox energy in a proton gradient. The protein is NADH-quinone oxidoreductase subunit K 2 of Rhizobium etli (strain CIAT 652).